The primary structure comprises 250 residues: 3-deoxy-manno-octulosonate cytidylyltransferase (250 aa).

Belongs to the KdsB family.

It is found in the cytoplasm. It carries out the reaction 3-deoxy-alpha-D-manno-oct-2-ulosonate + CTP = CMP-3-deoxy-beta-D-manno-octulosonate + diphosphate. It participates in nucleotide-sugar biosynthesis; CMP-3-deoxy-D-manno-octulosonate biosynthesis; CMP-3-deoxy-D-manno-octulosonate from 3-deoxy-D-manno-octulosonate and CTP: step 1/1. It functions in the pathway bacterial outer membrane biogenesis; lipopolysaccharide biosynthesis. Its function is as follows. Activates KDO (a required 8-carbon sugar) for incorporation into bacterial lipopolysaccharide in Gram-negative bacteria. This is 3-deoxy-manno-octulosonate cytidylyltransferase from Rhizobium meliloti (strain 1021) (Ensifer meliloti).